We begin with the raw amino-acid sequence, 386 residues long: Chaperone protein DnaJ (386 aa).

Positions 5 to 69 constitute a J domain; the sequence is DLYDVLGVKK…QKRAQYDQFG (65 aa). The CR-type zinc finger occupies 140 to 224; that stretch reads GKETSIKYNR…CHGAGVTEER (85 aa). Positions 153, 156, 170, 173, 196, 199, 212, and 215 each coordinate Zn(2+). CXXCXGXG motif repeat units lie at residues 153-160, 170-177, 196-203, and 212-219; these read CHTCHGSG, CSTCHGQG, CPTCGGKG, and CDTCHGAG.

Belongs to the DnaJ family. As to quaternary structure, homodimer. It depends on Zn(2+) as a cofactor.

It is found in the cytoplasm. Its function is as follows. Participates actively in the response to hyperosmotic and heat shock by preventing the aggregation of stress-denatured proteins and by disaggregating proteins, also in an autonomous, DnaK-independent fashion. Unfolded proteins bind initially to DnaJ; upon interaction with the DnaJ-bound protein, DnaK hydrolyzes its bound ATP, resulting in the formation of a stable complex. GrpE releases ADP from DnaK; ATP binding to DnaK triggers the release of the substrate protein, thus completing the reaction cycle. Several rounds of ATP-dependent interactions between DnaJ, DnaK and GrpE are required for fully efficient folding. Also involved, together with DnaK and GrpE, in the DNA replication of plasmids through activation of initiation proteins. The chain is Chaperone protein DnaJ from Limosilactobacillus fermentum (strain NBRC 3956 / LMG 18251) (Lactobacillus fermentum).